The sequence spans 234 residues: Phycobilisome rod-core linker polypeptide cpcG (234 aa).

Positions 11-191 (SSQNHRVNSF…PRYGSDFKER (181 aa)) constitute a PBS-linker domain.

The protein belongs to the phycobilisome linker protein family. As to quaternary structure, the phycobilisome is a hemidiscoidal structure that is composed of two distinct substructures: a core complex and a number of rods radiating from the core.

Its subcellular location is the plastid. The protein localises to the chloroplast thylakoid membrane. Its function is as follows. Rod-core linker protein required for attachment of phycocyanin to allophycocyanin in cores of phycobilisomes. In terms of biological role, linker polypeptides determine the state of aggregation and the location of the disk-shaped phycobiliprotein units within the phycobilisome and modulate their spectroscopic properties in order to mediate a directed and optimal energy transfer. This Cyanidium caldarium (Red alga) protein is Phycobilisome rod-core linker polypeptide cpcG (cpcG).